A 331-amino-acid polypeptide reads, in one-letter code: Putative mitochondrial 2-oxoglutarate/malate carrier protein (331 aa).

3 Solcar repeats span residues 39–128, 140–231, and 239–329; these read VRAA…FMSR, VGFK…AKAQ, and SSKV…LGWL. The next 6 membrane-spanning stretches (helical) occupy residues 42–62, 103–121, 148–168, 199–219, 245–265, and 309–329; these read ALPFINGGLSGMVATTVIQPI, GLSAGLLRQAVYTTARIGC, AGLAAGGLAAMIGNPADLALI, GVAALWAGAAPTVVRAMALNF, LSASAIAGFFASFFSLPFDFV, and YVRIAPHAMVTLLVADYLGWL.

Belongs to the mitochondrial carrier (TC 2.A.29) family.

The protein resides in the mitochondrion inner membrane. Catalyzes the transport of 2-oxoglutarate across the inner mitochondrial membrane. In Neurospora crassa (strain ATCC 24698 / 74-OR23-1A / CBS 708.71 / DSM 1257 / FGSC 987), this protein is Putative mitochondrial 2-oxoglutarate/malate carrier protein (mic-33).